We begin with the raw amino-acid sequence, 194 residues long: Imidazoleglycerol-phosphate dehydratase (194 aa).

The protein belongs to the imidazoleglycerol-phosphate dehydratase family.

It is found in the cytoplasm. It catalyses the reaction D-erythro-1-(imidazol-4-yl)glycerol 3-phosphate = 3-(imidazol-4-yl)-2-oxopropyl phosphate + H2O. It participates in amino-acid biosynthesis; L-histidine biosynthesis; L-histidine from 5-phospho-alpha-D-ribose 1-diphosphate: step 6/9. The chain is Imidazoleglycerol-phosphate dehydratase from Bacillus pumilus (strain SAFR-032).